Here is a 1336-residue protein sequence, read N- to C-terminus: MEAALSRKTAKKKRKTHTTRGYRKREQEVQKLIRATEGRISGPEHDMEALSLQFFHGFEGEMQQENDFAVEDCQESDEDSGGELAEEPTDSPSQTFIHIDLHDPPLAWGQLFKQRHYYDESLLYRPSNTLHFQLHLSDLSELKDSQIRMLNRYQEQSKSKSGKLGSDLIGQLSGQKPASFLMGKHLYRSVCHRRFQSVFFPPMPPSELKGLPSRRCLKLCLKQLRFSLHPQLLEEHRLAQQLEDLFDVYSQQRKQRICRKLREELEIARQVALKLLASAGQDQTAEVKRQLKLTRQLRQRYYAESAAQRNLLQRLLKEWAKLKELRRQQRFQCTRFQLGLRVVHPPDLEASYCAWKESFETDLAEVYREHLELFYTRLRLWTDQKSHSRTATGHSKPPRKPQFDRIMASLRKEYDKTFKDPEEPYVEVFRLHADEATARLSIPGGDQLPKARNYFLKIFLDGQFVGQSRTYRLEPDLQISINECIGVLLERSLPENLNIWLYEKSTLTPKSRRLAQISTPLVLSSKDDAVQEKLSFQALSSTQLAGDVYLYYEYRSTEGWGSALHLDDVQRLPDALRQTLLPQSLPALPQASKELVTPRPPSGRIKKSQLPSLIFAEQQLQFCGLDVLLDNRRFQLLHSRHQQRNLHTKQLRFVPALEQEISEEEPLPDGRGTVQLLEPGTYWNPIDLHKHRGRKFLQLLYEVIASQSARRAKALQTPLPLLLLAEDSDRSSGTGWTALWRAFCSVFQGQRNSLPREPSGWSGHQSAPDLFKSFCVSLHVVRATGVPVRSRHILNLNERRSSAGGDMSTSLFVTQTLMYSNVRPFVTLSYGQRLCRSRTAEGSNPTWNEQLQLQIQSQFGDLRDDLKISLFDELIEQQYSDEASDVYQRVQCNWLGEFRVPINSLLASRTFEGCIELAMPKVLVGYKRPLIDSVTNMPTDQYPEFKEAVHLWFYLSIEPGGGDLAPLHSCALACAEKPELQQYLDERRLELQQLLPQPQRYVEPLVCTAQGKRVCLTRLMDPVPLPPAAVPSGENPLEICIRYVSLLSHLRSYDPCQGFRGVWLDNQSLLDSTWCSVKDLGVLLCNYMLSLGLECWLILGVSCPHGECSFVLFRQPETAELFLVSPATGKRYQLQDVHCPLRRIYCVVGKQNIYFNIQTETRVSMTHFNLQDGACWFPLFRRRVPAPQSGVQKLDYAYKRSYELSQLQKHIERKIMKKISAWRTTRKTIWNRAFQPRLHKILCDMEDLSTFSRGRYDEPIFSEQLEREFPNYRLYGFTLNFAYTNLAAISERIRTSCIHYNHDASVEFCVAVHLHAHANDVLSVWLFLLSMVPLVE.

Disordered stretches follow at residues 1-29 and 70-97; these read MEAA…EQEV and VEDC…QTFI. Over residues 8 to 23 the composition is skewed to basic residues; it reads KTAKKKRKTHTTRGYR. Positions 70–89 are enriched in acidic residues; that stretch reads VEDCQESDEDSGGELAEEPT. A coiled-coil region spans residues 136 to 156; sequence LSDLSELKDSQIRMLNRYQEQ. The C2 domain maps to 755–915; that stretch reads PREPSGWSGH…LASRTFEGCI (161 aa).

As to quaternary structure, probable component of the tectonic-like complex (also named MKS complex), composed of B9d1, B9d2, Cc2d2a, Mks1 and tctn. Expressed in the antennae of chordotonal neurons and male germ cells (at protein level).

The protein localises to the cytoplasm. It is found in the cytoskeleton. It localises to the cilium basal body. Its subcellular location is the microtubule organizing center. The protein resides in the centrosome. The protein localises to the centriole. Its function is as follows. Probable component of the tectonic-like complex (also named MKS complex), a complex localized at the transition zone of primary cilia. Required for ciliary structure and function. This is Coiled-coil and C2 domain-containing protein 2A from Drosophila melanogaster (Fruit fly).